Here is a 150-residue protein sequence, read N- to C-terminus: Cytochrome c oxidase subunit 5A, mitochondrial (150 aa).

The N-terminal 41 residues, 1 to 41 (MLGAALRRCAVAATTRAGPRGLLHSARTPGPAAAIQSVRCX), are a transit peptide targeting the mitochondrion. Positions 2 to 17 (LGAALRRCAVAATTRA) match the SIFI-degron motif. N6-acetyllysine is present on residues K87 and K113. Position 141 is a phosphothreonine (T141).

The protein belongs to the cytochrome c oxidase subunit 5A family. Component of the cytochrome c oxidase (complex IV, CIV), a multisubunit enzyme composed of 14 subunits. The complex is composed of a catalytic core of 3 subunits MT-CO1, MT-CO2 and MT-CO3, encoded in the mitochondrial DNA, and 11 supernumerary subunits COX4I, COX5A, COX5B, COX6A, COX6B, COX6C, COX7A, COX7B, COX7C, COX8 and NDUFA4, which are encoded in the nuclear genome. The complex exists as a monomer or a dimer and forms supercomplexes (SCs) in the inner mitochondrial membrane with NADH-ubiquinone oxidoreductase (complex I, CI) and ubiquinol-cytochrome c oxidoreductase (cytochrome b-c1 complex, complex III, CIII), resulting in different assemblies (supercomplex SCI(1)III(2)IV(1) and megacomplex MCI(2)III(2)IV(2)). Interacts with AFG1L. Interacts with RAB5IF. In response to mitochondrial stress, the precursor protein is ubiquitinated by the SIFI complex in the cytoplasm before mitochondrial import, leading to its degradation. Within the SIFI complex, UBR4 initiates ubiquitin chain that are further elongated or branched by KCMF1.

The protein resides in the mitochondrion inner membrane. The protein operates within energy metabolism; oxidative phosphorylation. Functionally, component of the cytochrome c oxidase, the last enzyme in the mitochondrial electron transport chain which drives oxidative phosphorylation. The respiratory chain contains 3 multisubunit complexes succinate dehydrogenase (complex II, CII), ubiquinol-cytochrome c oxidoreductase (cytochrome b-c1 complex, complex III, CIII) and cytochrome c oxidase (complex IV, CIV), that cooperate to transfer electrons derived from NADH and succinate to molecular oxygen, creating an electrochemical gradient over the inner membrane that drives transmembrane transport and the ATP synthase. Cytochrome c oxidase is the component of the respiratory chain that catalyzes the reduction of oxygen to water. Electrons originating from reduced cytochrome c in the intermembrane space (IMS) are transferred via the dinuclear copper A center (CU(A)) of subunit 2 and heme A of subunit 1 to the active site in subunit 1, a binuclear center (BNC) formed by heme A3 and copper B (CU(B)). The BNC reduces molecular oxygen to 2 water molecules using 4 electrons from cytochrome c in the IMS and 4 protons from the mitochondrial matrix. The protein is Cytochrome c oxidase subunit 5A, mitochondrial (COX5A) of Pan paniscus (Pygmy chimpanzee).